Consider the following 560-residue polypeptide: Formate--tetrahydrofolate ligase (560 aa).

70–77 serves as a coordination point for ATP; that stretch reads TPAGEGKT.

Belongs to the formate--tetrahydrofolate ligase family.

It catalyses the reaction (6S)-5,6,7,8-tetrahydrofolate + formate + ATP = (6R)-10-formyltetrahydrofolate + ADP + phosphate. The protein operates within one-carbon metabolism; tetrahydrofolate interconversion. The sequence is that of Formate--tetrahydrofolate ligase from Methanocorpusculum labreanum (strain ATCC 43576 / DSM 4855 / Z).